Here is a 350-residue protein sequence, read N- to C-terminus: Probable DNA polymerase III subunit delta (350 aa).

It belongs to the DNA polymerase HolA subunit family. As to quaternary structure, component of the DNA clamp loading complex consisting of tau(3):delta(1):delta'(1). The DNA polymerase III holoenzyme complex contains at least 10 different subunits organized into 3 functionally essential subassemblies: the Pol III core, the beta sliding clamp processivity factor and the clamp-loading complex. The Pol III core (subunits alpha, epsilon and theta) contains the polymerase and the 3'-5' exonuclease proofreading activities. The polymerase is tethered to the template via the dimeric beta sliding clamp processivity factor. The DNA clamp-loading complex assembles the beta sliding clamp onto the primed template and plays a central role in the organization and communication at the replication fork.

The enzyme catalyses DNA(n) + a 2'-deoxyribonucleoside 5'-triphosphate = DNA(n+1) + diphosphate. Functionally, part of the beta sliding clamp loading complex, which hydrolyzes ATP to load the beta clamp onto primed DNA to form the DNA replication pre-initiation complex. DNA polymerase III is a complex, multichain enzyme responsible for most of the replicative synthesis in bacteria. This DNA polymerase also exhibits 3'-5' exonuclease activity. The delta subunit is the wrench that will open the beta subunit dimer. The DNA clamp loading complex (tau(3),delta,delta') is thought to load beta dimers onto DNA by binding ATP which alters the complex's conformation so it can bind beta sliding clamp dimers and open them at one interface. Primed DNA is recognized, ATP is hydrolyzed releasing the clamp loading complex and closing the beta sliding clamp ring around the primed DNA. This chain is Probable DNA polymerase III subunit delta, found in Aquifex aeolicus (strain VF5).